The primary structure comprises 96 residues: Neurotoxin beta-KTx 31.1 (96 aa).

The signal sequence occupies residues 1-21; the sequence is MQAKRTILLLLLLGMVALSSC. The propeptide occupies 22 to 29; that stretch reads GLREKHVQ. The region spanning 56–93 is the BetaSPN-type CS-alpha/beta domain; that stretch reads QYGCPIIKDYCSFHCNDLEKHEGYCHGTKCKCNIPNQY. 3 disulfides stabilise this stretch: cysteine 59/cysteine 80, cysteine 66/cysteine 85, and cysteine 70/cysteine 87.

The protein belongs to the long chain scorpion toxin family. Class 1 subfamily. As to expression, expressed by the venom gland.

It localises to the secreted. Its function is as follows. Inhibits voltage-gated potassium channel. In Lychas mucronatus (Chinese swimming scorpion), this protein is Neurotoxin beta-KTx 31.1.